Consider the following 418-residue polypeptide: Serine protease inhibitor A3N (418 aa).

An N-terminal signal peptide occupies residues 1 to 29; that stretch reads MTRLVTLELLMAGIGSALLCFPDCILGED. Residue S93 is modified to Phosphoserine. N-linked (GlcNAc...) asparagine glycans are attached at residues N104, N258, and N269. The segment at 367 to 394 is RCL; that stretch reads GTEAAAATGVKFVPMSAKLDPLIIAFDR.

It belongs to the serpin family. In terms of processing, N-glycosylated. In terms of tissue distribution, liver.

The protein localises to the secreted. This is Serine protease inhibitor A3N (Serpina3n) from Rattus norvegicus (Rat).